The following is a 506-amino-acid chain: Peptidyl-prolyl cis-trans isomerase CYP59 (506 aa).

Residues 1–161 (MSVLIVTSLG…KNIRIKHTHI (161 aa)) enclose the PPIase cyclophilin-type domain. In terms of domain architecture, RRM spans 243 to 321 (NVLFVCKLNP…RRIHVDFSQS (79 aa)). The segment at 341–357 (GCFKCGSTDHIAKDCVG) adopts a CCHC-type zinc-finger fold. 2 stretches are compositionally biased toward basic and acidic residues: residues 388–404 (ETPKHNSHERERSEKIQ) and 412–506 (GEGK…RRDR). Residues 388 to 506 (ETPKHNSHER…REARHERRDR (119 aa)) form a disordered region.

It belongs to the cyclophilin-type PPIase family. Component of the BZR1 complex. Interacts with NRPB1 (via CTD domain), SCL28, SCL30, SCL30A, SCL33, SC35, SR30, SR34, RSZ21, RS2Z33, RS31 and RS40. As to expression, ubiquitous.

Its subcellular location is the nucleus. The enzyme catalyses [protein]-peptidylproline (omega=180) = [protein]-peptidylproline (omega=0). In terms of biological role, PPIases accelerate the folding of proteins. It catalyzes the cis-trans isomerization of proline imidic peptide bonds in oligopeptides. Influences somehow regulation of RNA pol II (CTD) phosphorylation. Binds RNA with preferences for GC-rich sequences. Probably involved in activities connecting transcription and pre-mRNA processing. Involved in brassinostroid response. The polypeptide is Peptidyl-prolyl cis-trans isomerase CYP59 (CYP59) (Arabidopsis thaliana (Mouse-ear cress)).